We begin with the raw amino-acid sequence, 101 residues long: Small ribosomal subunit protein bS18c (101 aa).

Residues 82-101 (KQFERAESTPRTPGPRTRNK) form a disordered region.

Belongs to the bacterial ribosomal protein bS18 family. Part of the 30S ribosomal subunit.

It localises to the plastid. The protein resides in the chloroplast. This is Small ribosomal subunit protein bS18c from Platanus occidentalis (Sycamore).